A 478-amino-acid chain; its full sequence is Patatin-like phospholipase domain-containing protein 2 (478 aa).

Over 1-8 the chain is Cytoplasmic; that stretch reads MFPRETKW. The helical transmembrane segment at 9–29 threads the bilayer; that stretch reads NISFAGCGFLGVYHIGVASCL. Residues 10–179 form the PNPLA domain; that stretch reads ISFAGCGFLG…SDNLPLYELK (170 aa). Positions 14–19 match the GXGXXG motif; sequence GCGFLG. At 30–42 the chain is on the extracellular side; the sequence is REHAPFLVANATH. Asparagine 39 carries an N-linked (GlcNAc...) asparagine glycan. The helical transmembrane segment at 43-63 threads the bilayer; sequence IYGASAGALTATALVTGACLG. The GXSXG motif lies at 45–49; the sequence is GASAG. Residue serine 47 is the Nucleophile of the active site. Residues 64–137 lie on the Cytoplasmic side of the membrane; the sequence is EAGANIIEVS…IISHFSSKDE (74 aa). A Glycyl lysine isopeptide (Lys-Gly) (interchain with G-Cter in ubiquitin) cross-link involves residue lysine 92. The chain crosses the membrane as a helical span at residues 138–158; that stretch reads LIQANVCSTFIPVYCGLIPPT. At 159 to 323 the chain is on the extracellular side; that stretch reads LQGVRYVDGG…TTLSNMLPVR (165 aa). The Proton acceptor role is filled by aspartate 166. Positions 166 to 168 match the DGA/G motif; sequence DGG. A helical transmembrane segment spans residues 324-344; it reads LATAMMVPYTLPLESAVSFTI. Residues 345–478 lie on the Cytoplasmic side of the membrane; sequence RLLEWLPDVP…PQDPSGLPPC (134 aa). Phosphoserine; in vitro is present on serine 366. At serine 388 the chain carries Phosphoserine; by PKA. Phosphoserine occurs at positions 398 and 422. Residues 456 to 478 form a disordered region; it reads RAPASPTATDPATPQDPSGLPPC. A compositionally biased stretch (low complexity) spans 457–478; it reads APASPTATDPATPQDPSGLPPC. Serine 460 carries the post-translational modification Phosphoserine; in vitro.

As to quaternary structure, interacts with ABHD5; this association stimulates PNPLA2 triglyceride hydrolase activity. Interacts with SERPINF1; this interaction stimulates the phospholipase A2 activity of PNPLA2. Despite a colocalization in lipid droplets, it probably does not interact with PLIN. Interacts with PLIN5; prevents interaction with ABHD5. Interacts with FAF2. Post-translationally, phosphorylation at Ser-398 by PKA is increased during fasting and moderate intensity exercise, and moderately increases lipolytic activity. Ubiquitinated by PEX2 in response to reactive oxygen species (ROS), leading to its degradation. Ubiquitination is stimulated by LDAH.

It is found in the lipid droplet. The protein resides in the cell membrane. Its subcellular location is the cytoplasm. The enzyme catalyses a triacylglycerol + H2O = a diacylglycerol + a fatty acid + H(+). The catalysed reaction is a triacylglycerol + H2O = a 1,2-diacylglycerol + a fatty acid + H(+). It carries out the reaction a triacylglycerol + H2O = a 1,3-diacylglycerol + a fatty acid + H(+). It catalyses the reaction a triacyl-sn-glycerol + H2O = a 1,3-diacyl-sn-glycerol + a fatty acid + H(+). The enzyme catalyses a triacyl-sn-glycerol + H2O = a 2,3-diacyl-sn-glycerol + a fatty acid + H(+). The catalysed reaction is a 1-acylglycerol + a 1,3-diacylglycerol = a triacylglycerol + glycerol. It carries out the reaction a 1-acylglycerol + a 1,2-diacylglycerol = a triacylglycerol + glycerol. It catalyses the reaction 2 a 1-acylglycerol = a 1,2-diacylglycerol + glycerol. The enzyme catalyses a triacylglycerol + all-trans-retinol = an all-trans-retinyl ester + a diacylglycerol. The catalysed reaction is 1,2-di-(9Z-octadecenoyl)-glycerol + (9Z)-octadecenoate + H(+) = 1,2,3-tri-(9Z-octadecenoyl)-glycerol + H2O. It carries out the reaction 1,2,3-tri-(9Z-octadecenoyl)-glycerol + H2O = 1,3-di-(9Z-octadecenoyl)-glycerol + (9Z)-octadecenoate + H(+). It catalyses the reaction 1-(9Z-octadecenoyl)-glycerol + 1,3-di-(9Z-octadecenoyl)-glycerol = 1,2,3-tri-(9Z-octadecenoyl)-glycerol + glycerol. The enzyme catalyses 1-(9Z-octadecenoyl)-glycerol + 1,2-di-(9Z-octadecenoyl)-glycerol = 1,2,3-tri-(9Z-octadecenoyl)-glycerol + glycerol. The catalysed reaction is 2 1-(9Z-octadecenoyl)-glycerol = 1,2-di-(9Z-octadecenoyl)-glycerol + glycerol. It carries out the reaction 1,2,3-tri-(9Z-octadecenoyl)-glycerol + all-trans-retinol = all-trans-retinyl 9Z-octadecenoate + di-(9Z)-octadecenoylglycerol. It catalyses the reaction 1,2,3-tri-(9Z)-hexadecenoylglycerol + H2O = 1,3-di-(9Z)-hexadecenoylglycerol + (9Z)-hexadecenoate + H(+). The enzyme catalyses 1,2,3-tri-(9Z,12Z)-octadecadienoylglycerol + H2O = 1,3-di-(9Z,12Z)-octadecadienoylglycerol + (9Z,12Z)-octadecadienoate + H(+). The catalysed reaction is 1,2,3-tri-(9Z,12Z,15Z)-octadecatrienoylglycerol + H2O = 1,3-di-(9Z,12Z,15Z)-octadecatrienoylglycerol + (9Z,12Z,15Z)-octadecatrienoate + H(+). It carries out the reaction 1,3-di-(9Z)-octadecenoyl-2-hexadecanoylglycerol + H2O = 1,3-di-(9Z-octadecenoyl)-glycerol + hexadecanoate + H(+). It catalyses the reaction 1,2-di-(9Z)-octadecenoyl-3-hexadecanoyl-sn-glycerol + H2O = 1-(9Z)-octadecenoyl-3-hexadecanoyl-sn-glycerol + (9Z)-octadecenoate + H(+). The enzyme catalyses 1-hexadecanoyl-2,3-di-(9Z)-octadecenoyl-sn-glycerol + H2O = 1-hexadecanoyl-3-(9Z)-octadecenoyl-sn-glycerol + (9Z)-octadecenoate + H(+). The catalysed reaction is 1,2,3-tri-(9Z-octadecenoyl)-glycerol + H2O = 2,3-di-(9Z)-octadecenoyl-sn-glycerol + (9Z)-octadecenoate + H(+). It carries out the reaction 1,2,3-tri-(9Z)-hexadecenoylglycerol + H2O = 2,3-di-(9Z)-hexadecenoyl-sn-glycerol + (9Z)-hexadecenoate + H(+). It catalyses the reaction 1,2,3-tri-(9Z,12Z)-octadecadienoylglycerol + H2O = 2,3-di-(9Z,12Z)-octadecadienoyl-sn-glycerol + (9Z,12Z)-octadecadienoate + H(+). The enzyme catalyses 1,2,3-tri-(9Z,12Z,15Z)-octadecatrienoylglycerol + H2O = 2,3-di-(9Z,12Z,15Z)-octadecatrienoyl-sn-glycerol + (9Z,12Z,15Z)-octadecatrienoate + H(+). The catalysed reaction is 1,3-di-(9Z)-octadecenoyl-2-hexadecanoylglycerol + H2O = 2-hexadecanoyl-3-(9Z)-octadecenoyl-sn-glycerol + (9Z)-octadecenoate + H(+). It carries out the reaction 1-hexadecanoyl-2,3-di-(9Z)-octadecenoyl-sn-glycerol + H2O = 2,3-di-(9Z)-octadecenoyl-sn-glycerol + hexadecanoate + H(+). It catalyses the reaction 1,2-di-(9Z)-octadecenoyl-3-hexadecanoyl-sn-glycerol + H2O = 2-(9Z-octadecenoyl)-3-hexadecanoyl-sn-glycerol + (9Z)-octadecenoate + H(+). The enzyme catalyses a 1,2-diacyl-sn-glycero-3-phosphocholine + H2O = a 1-acyl-sn-glycero-3-phosphocholine + a fatty acid + H(+). The catalysed reaction is 1,2,3-tri-(9Z-octadecenoyl)-glycerol + 9-hydroxy-octadecanoate = 9-(9Z-octadecenoyloxy)-octadecanoate + 2,3-di-(9Z)-octadecenoyl-sn-glycerol. It carries out the reaction 1-hexadecanoyl-2,3-di-(9Z)-octadecenoyl-sn-glycerol + 9-hydroxy-octadecanoate = 9-hexadecanoyloxy-octadecanoate + 2,3-di-(9Z)-octadecenoyl-sn-glycerol. It catalyses the reaction 1,2,3-tri-(10Z)-heptadecenoylglycerol + 9-hydroxy-octadecanoate = 2,3-di-(10Z-heptadecenoyl)-sn-glycerol + 9-(10Z-heptadecenoyloxy)-octadecanoate. The enzyme catalyses 1,2,3-tri-(9Z,12Z)-octadecadienoylglycerol + 9-hydroxy-octadecanoate = 2,3-di-(9Z,12Z)-octadecadienoyl-sn-glycerol + 9-(9Z,12Z-octadecadienoyloxy)-octadecanoate. The catalysed reaction is 1,2,3-tri-(9Z)-hexadecenoylglycerol + 9-hydroxy-octadecanoate = 2,3-di-(9Z)-hexadecenoyl-sn-glycerol + 9-(9Z-hexadecenoyloxy)-octadecanoate. It carries out the reaction 9-hydroxy-octadecanoate + 1,2-di-(9Z-octadecenoyl)-sn-glycerol = 9-(9Z-octadecenoyloxy)-octadecanoate + 2-(9Z-octadecenoyl)-glycerol. It catalyses the reaction 1-hexadecanoyl-2,3-di-(9Z)-octadecenoyl-sn-glycerol + 9-hydroxy-octadecanoate = 1-hexadecanoyl-3-(9Z)-octadecenoyl-sn-glycerol + 9-(9Z-octadecenoyloxy)-octadecanoate. It participates in glycerolipid metabolism; triacylglycerol degradation. In terms of biological role, catalyzes the initial step in triglyceride hydrolysis in adipocyte and non-adipocyte lipid droplets. Exhibits a strong preference for the hydrolysis of long-chain fatty acid esters at the sn-2 position of the glycerol backbone and acts coordinately with LIPE/HLS and DGAT2 within the lipolytic cascade. Also possesses acylglycerol transacylase and phospholipase A2 activities. Transfers fatty acid from triglyceride to retinol, hydrolyzes retinylesters, and generates 1,3-diacylglycerol from triglycerides. Regulates adiposome size and may be involved in the degradation of adiposomes. Catalyzes the formation of an ester bond between hydroxy fatty acids and fatty acids derived from triglycerides or diglycerides to generate fatty acid esters of hydroxy fatty acids (FAHFAs) in adipocytes. Acts antagonistically with LDAH in regulation of cellular lipid stores. Inhibits LDAH-stimulated lipid droplet fusion. May play an important role in energy homeostasis. May play a role in the response of the organism to starvation, enhancing hydrolysis of triglycerides and providing free fatty acids to other tissues to be oxidized in situations of energy depletion. The protein is Patatin-like phospholipase domain-containing protein 2 of Rattus norvegicus (Rat).